A 780-amino-acid chain; its full sequence is ATP-dependent 6-phosphofructokinase, liver type (780 aa).

The residue at position 2 (alanine 2) is an N-acetylalanine. The segment at 2-390 is N-terminal catalytic PFK domain 1; sequence ASVDLEKLRT…NWNIYKLLSH (389 aa). ATP-binding positions include glycine 25, 88-89, and 118-121; these read RC and GDGS. Mg(2+) is bound at residue aspartate 119. Substrate-binding positions include 164 to 166, arginine 201, 208 to 210, glutamate 264, arginine 292, and 298 to 301; these read SID, MGR, and HVQR. The active-site Proton acceptor is aspartate 166. Serine 377 carries the post-translational modification Phosphoserine. Residues 391-400 form an interdomain linker region; it reads QKISKEKTNF. The C-terminal regulatory PFK domain 2 stretch occupies residues 401 to 780; that stretch reads SLAILNVGAP…RRTLSIETGF (380 aa). Beta-D-fructose 2,6-bisphosphate-binding positions include arginine 470, 527-531, arginine 565, 572-574, and glutamate 628; these read TISNN and MGG. Serine 529 carries an O-linked (GlcNAc) serine glycan. At tyrosine 640 the chain carries Phosphotyrosine. Beta-D-fructose 2,6-bisphosphate is bound by residues arginine 654, 660 to 663, and arginine 734; that span reads HLQQ. Phosphoserine is present on serine 775.

Belongs to the phosphofructokinase type A (PFKA) family. ATP-dependent PFK group I subfamily. Eukaryotic two domain clade 'E' sub-subfamily. As to quaternary structure, homo- and heterotetramers. Phosphofructokinase (PFK) enzyme functions as a tetramer composed of different combinations of 3 types of subunits, called PFKM (M), PFKL (L) and PFKP (P). The composition of the PFK tetramer differs according to the tissue type it is present in. The kinetic and regulatory properties of the tetrameric enzyme are dependent on the subunit composition, hence can vary across tissues. Requires Mg(2+) as cofactor. Post-translationally, glcNAcylation at Ser-529 by OGT decreases enzyme activity, leading to redirect glucose flux through the oxidative pentose phosphate pathway. Glycosylation is stimulated by both hypoxia and glucose deprivation.

Its subcellular location is the cytoplasm. The enzyme catalyses beta-D-fructose 6-phosphate + ATP = beta-D-fructose 1,6-bisphosphate + ADP + H(+). It functions in the pathway carbohydrate degradation; glycolysis; D-glyceraldehyde 3-phosphate and glycerone phosphate from D-glucose: step 3/4. Its activity is regulated as follows. Allosterically activated by ADP, AMP, or fructose 2,6-bisphosphate, and allosterically inhibited by ATP or citrate. GlcNAcylation by OGT overcomes allosteric regulation. Its function is as follows. Catalyzes the phosphorylation of D-fructose 6-phosphate to fructose 1,6-bisphosphate by ATP, the first committing step of glycolysis. Negatively regulates the phagocyte oxidative burst in response to bacterial infection by controlling cellular NADPH biosynthesis and NADPH oxidase-derived reactive oxygen species. Upon macrophage activation, drives the metabolic switch toward glycolysis, thus preventing glucose turnover that produces NADPH via pentose phosphate pathway. The sequence is that of ATP-dependent 6-phosphofructokinase, liver type (PFKL) from Bos taurus (Bovine).